Consider the following 247-residue polypeptide: 5'-nucleotidase SurE (247 aa).

A divalent metal cation-binding residues include aspartate 8, aspartate 9, serine 39, and asparagine 91.

Belongs to the SurE nucleotidase family. It depends on a divalent metal cation as a cofactor.

The protein resides in the cytoplasm. The enzyme catalyses a ribonucleoside 5'-phosphate + H2O = a ribonucleoside + phosphate. In terms of biological role, nucleotidase that shows phosphatase activity on nucleoside 5'-monophosphates. In Chromobacterium violaceum (strain ATCC 12472 / DSM 30191 / JCM 1249 / CCUG 213 / NBRC 12614 / NCIMB 9131 / NCTC 9757 / MK), this protein is 5'-nucleotidase SurE.